Here is a 400-residue protein sequence, read N- to C-terminus: Glycerol-3-phosphate dehydrogenase [NAD(+)] 1, chloroplastic (400 aa).

Residues 1–32 (MRFRSFFFSSSIFSLSHSRSPSLSSSRFSSLS) constitute a chloroplast transit peptide. Residues 61–66 (GSGNWG), F92, F149, K172, and A205 each bind NAD(+). A substrate-binding site is contributed by K172. K257 acts as the Proton acceptor in catalysis. The NAD(+) site is built by R321, K350, and Q352. Substrate is bound at residue 321–322 (RN).

The protein belongs to the NAD-dependent glycerol-3-phosphate dehydrogenase family. As to expression, expressed in young seedlings, flowers and siliques. Expressed at low levels in roots.

It localises to the plastid. Its subcellular location is the chloroplast. The enzyme catalyses sn-glycerol 3-phosphate + NAD(+) = dihydroxyacetone phosphate + NADH + H(+). It functions in the pathway membrane lipid metabolism; glycerophospholipid metabolism. Its function is as follows. Involved in glycerolipid metabolism. This Arabidopsis thaliana (Mouse-ear cress) protein is Glycerol-3-phosphate dehydrogenase [NAD(+)] 1, chloroplastic (DHAPRD).